We begin with the raw amino-acid sequence, 77 residues long: Small ribosomal subunit protein bS16c (77 aa).

Belongs to the bacterial ribosomal protein bS16 family.

The protein localises to the plastid. It is found in the chloroplast. This Eucalyptus globulus subsp. globulus (Tasmanian blue gum) protein is Small ribosomal subunit protein bS16c.